The chain runs to 119 residues: Protein sigma-1-small (119 aa).

It belongs to the orthoreovirus sigma-1s protein family.

In Mammalia (T1L), this protein is Protein sigma-1-small (S1).